Here is a 389-residue protein sequence, read N- to C-terminus: Chalcone synthase 1 (389 aa).

Residue cysteine 164 is part of the active site.

The protein belongs to the thiolase-like superfamily. Chalcone/stilbene synthases family.

It carries out the reaction (E)-4-coumaroyl-CoA + 3 malonyl-CoA + 3 H(+) = 2',4,4',6'-tetrahydroxychalcone + 3 CO2 + 4 CoA. The protein operates within secondary metabolite biosynthesis; flavonoid biosynthesis. In terms of biological role, the primary product of this enzyme is 4,2',4',6'-tetrahydroxychalcone (also termed naringenin-chalcone or chalcone) which can under specific conditions spontaneously isomerize into naringenin. This is Chalcone synthase 1 (CHS1) from Pisum sativum (Garden pea).